Consider the following 662-residue polypeptide: Sodium/glucose cotransporter 1 (662 aa).

At 1–24 (MDSSTLSPLTTSTAAPLESYERIR) the chain is on the extracellular side. Residues 25–47 (NAADISVIVIYFLVVMAVGLWAM) traverse the membrane as a helical segment. Topologically, residues 48 to 66 (FSTNRGTVGGFFLAGRSMV) are cytoplasmic. The chain crosses the membrane as a helical span at residues 67–90 (WWPIGASLFASNIGSGHFVGLAGT). At 91 to 95 (GAASG) the chain is on the extracellular side. The helical transmembrane segment at 96–117 (IATGGFEWNALIMVVVLGWVFV) threads the bilayer. The Cytoplasmic segment spans residues 118-139 (PIYIRAGVVTMPEYLQKRFGGK). Residues 140-169 (RIQIYLSILSLLLYIFTKISADIFSGAIFI) traverse the membrane as a helical segment. The Extracellular portion of the chain corresponds to 170–176 (QLTLGLD). A helical transmembrane segment spans residues 177–193 (IYVAIIILLVITGLYTI). The Cytoplasmic segment spans residues 194-202 (TGGLAAVIY). A helical transmembrane segment spans residues 203–221 (TDTLQTAIMMVGSVILTGF). Residues 222 to 275 (AFHEVGGYEAFTEKYMRAIPSQISYGNTSIPQKCYTPREDAFHIFRDAITGDIP) lie on the Extracellular side of the membrane. The N-linked (GlcNAc...) asparagine glycan is linked to N248. Cystine bridges form between C255-C511, C255-C608, C345-C351, C355-C361, and C517-C522. A helical membrane pass occupies residues 276–295 (WPGLVFGMSILTLWYWCTDQ). Topologically, residues 296–309 (VIVQRCLSAKNLSH) are cytoplasmic. A helical transmembrane segment spans residues 310–331 (VKAGCILCGYLKVMPMFLIVMM). Over 332–375 (GMVSRILYTDKVACVVPSECERYCGTRVGCTNIAFPTLVVELMP) the chain is Extracellular. The chain crosses the membrane as a helical span at residues 376–406 (NGLRGLMLSVMMASLMSSLTSIFNSASTLFT). The Cytoplasmic portion of the chain corresponds to 407–422 (MDIYTKIRKKASEKEL). A helical transmembrane segment spans residues 423–444 (MIAGRLFMLFLIGISIAWVPIV). Over 445-451 (QSAQSGQ) the chain is Extracellular. The chain crosses the membrane as a helical span at residues 452–477 (LFDYIQSITSYLGPPIAAVFLLAIFW). Residue Q457 participates in D-glucose binding. Residues 478 to 481 (KRVN) lie on the Cytoplasmic side of the membrane. Residues 482 to 504 (EPGAFWGLVLGFLIGISRMITEF) form a helical membrane-spanning segment. At 505–525 (AYGTGSCMEPSNCPTIICGVH) the chain is on the extracellular side. Residues 526–547 (YLYFAIILFVISIITVVVVSLF) form a helical membrane-spanning segment. Topologically, residues 548–642 (TKPIPDVHLY…TSEHPLWRTV (95 aa)) are cytoplasmic. Residues 643-660 (VNINGVILLAVAVFCYAY) traverse the membrane as a helical segment. Residues 661-662 (FA) lie on the Extracellular side of the membrane.

This sequence belongs to the sodium:solute symporter (SSF) (TC 2.A.21) family. Post-translationally, N-glycosylation is not necessary for the cotransporter function. As to expression, found predominantly in intestine, renal cortex and in outer renal medulla.

It localises to the apical cell membrane. It carries out the reaction D-glucose(out) + 2 Na(+)(out) = D-glucose(in) + 2 Na(+)(in). It catalyses the reaction D-galactose(out) + 2 Na(+)(out) = D-galactose(in) + 2 Na(+)(in). With respect to regulation, enhanced by the interaction with PDZK1IP1/MAP17; but unlike SLC5A2/SGLT2, PDZK1IP1 is not essential for SLC5A1 transporter activity. Possibly modulated by cholesterol binding. Electrogenic Na(+)-coupled sugar symporter that actively transports D-glucose or D-galactose at the plasma membrane, with a Na(+) to sugar coupling ratio of 2:1. Transporter activity is driven by a transmembrane Na(+) electrochemical gradient set by the Na(+)/K(+) pump. Has a primary role in the transport of dietary monosaccharides from enterocytes to blood. Responsible for the absorption of D-glucose or D-galactose across the apical brush-border membrane of enterocytes, whereas basolateral exit is provided by GLUT2. Additionally, functions as a D-glucose sensor in enteroendocrine cells, triggering the secretion of the incretins GCG and GIP that control food intake and energy homeostasis. Together with SGLT2, functions in reabsorption of D-glucose from glomerular filtrate, playing a nonredundant role in the S3 segment of the proximal tubules. Transports D-glucose into endometrial epithelial cells, controlling glycogen synthesis and nutritional support for the embryo as well as the decidual transformation of endometrium prior to conception. Acts as a water channel enabling passive water transport in response to the osmotic gradient created upon sugar and Na(+) uptake. Has high water conductivity comparable to aquaporins and therefore is expected to play an important role in transepithelial water permeability, especially in the small intestine. This Oryctolagus cuniculus (Rabbit) protein is Sodium/glucose cotransporter 1 (SLC5A1).